Here is a 51-residue protein sequence, read N- to C-terminus: Sperm protamine P1 (51 aa).

This sequence belongs to the protamine P1 family. Testis.

The protein resides in the nucleus. The protein localises to the chromosome. Functionally, protamines substitute for histones in the chromatin of sperm during the haploid phase of spermatogenesis. They compact sperm DNA into a highly condensed, stable and inactive complex. This is Sperm protamine P1 (PRM1) from Nasalis larvatus (Proboscis monkey).